Consider the following 123-residue polypeptide: Small ribosomal subunit protein uS12 (123 aa).

D89 is subject to 3-methylthioaspartic acid.

This sequence belongs to the universal ribosomal protein uS12 family. In terms of assembly, part of the 30S ribosomal subunit. Contacts proteins S8 and S17. May interact with IF1 in the 30S initiation complex.

With S4 and S5 plays an important role in translational accuracy. Its function is as follows. Interacts with and stabilizes bases of the 16S rRNA that are involved in tRNA selection in the A site and with the mRNA backbone. Located at the interface of the 30S and 50S subunits, it traverses the body of the 30S subunit contacting proteins on the other side and probably holding the rRNA structure together. The combined cluster of proteins S8, S12 and S17 appears to hold together the shoulder and platform of the 30S subunit. The sequence is that of Small ribosomal subunit protein uS12 from Nitrobacter winogradskyi (strain ATCC 25391 / DSM 10237 / CIP 104748 / NCIMB 11846 / Nb-255).